Here is a 546-residue protein sequence, read N- to C-terminus: Probable malate:quinone oxidoreductase (546 aa).

This sequence belongs to the MQO family. It depends on FAD as a cofactor.

It carries out the reaction (S)-malate + a quinone = a quinol + oxaloacetate. It functions in the pathway carbohydrate metabolism; tricarboxylic acid cycle; oxaloacetate from (S)-malate (quinone route): step 1/1. In Acinetobacter baumannii (strain AB0057), this protein is Probable malate:quinone oxidoreductase.